Reading from the N-terminus, the 103-residue chain is Protamine-2 (103 aa).

Residues 1–103 (MVRYRMRSLS…RTRRRRCRRY (103 aa)) form a disordered region. A phosphoserine mark is found at Ser8 and Ser10. Basic and acidic residues predominate over residues 8-17 (SLSERPHEVH). Residues 23 to 35 (GQEQGHNGQEEQG) show a composition bias toward low complexity. Position 37 is a phosphoserine (Ser37). The segment covering 39-48 (EHVEVYERTH) has biased composition (basic and acidic residues). A compositionally biased stretch (basic residues) spans 51 to 103 (YSHHRRRRCSRRRLYRIHRRRHRSCRRRRRRSCRHRRRHRRGCRTRRRRCRRY).

The protein belongs to the protamine P2 family. Interacts with TDRP. In terms of processing, proteolytic processing into mature chains is required for histone eviction during spermatogenesis. Transition proteins (TNP1 and TNP2) are required for processing. In terms of tissue distribution, testis.

It is found in the nucleus. It localises to the chromosome. Protamines substitute for histones in the chromatin of sperm during the haploid phase of spermatogenesis. They compact sperm DNA into a highly condensed, stable and inactive complex. The protein is Protamine-2 (PRM2) of Semnopithecus entellus (Northern plains gray langur).